A 221-amino-acid chain; its full sequence is MVLTDIEYLLSYLEAHHVPTIKKKRHTYLTYHGLAEHYTYVLKDGIIKNSIILQDGREYNLSYIAKPDVISLLRDEVSRSTDQPFNVRIESEYATFYQVNRVAFWKYVNSTPELQNYVKNYYRKKLSENILRLQRMVMNGKKGAICAFIYSLVDLFGRKVNEGILIDFVVTNDDIAGFCGISSRSSVNRMLKELRTDGVITVKNHKFIIQDVSYLLDQIAN.

One can recognise an HTH crp-type domain in the interval 139-213 (NGKKGAICAF…NHKFIIQDVS (75 aa)). Residues 172–192 (NDDIAGFCGISSRSSVNRMLK) constitute a DNA-binding region (H-T-H motif).

In terms of assembly, multimerizes on DNA. Multimerization is required for transcription activation.

Its activity is regulated as follows. L-lactate acts as a positive effector on the binding and multimerization of LarR on DNA, while D-lactate antagonizes the positive effect of L-lactate. Its function is as follows. Positive transcriptional regulator that is absolutely required for the expression of lactate racemase (Lar) activity. Controls Lar expression by sensing the L-/D-lactate ration. Binds to a 16-bp palindromic sequence (Lar box motif) that is present in the larR-larA intergenic region, allowing transcription of the larABCDE operon. This is Lactate racemization regulatory protein from Lactiplantibacillus plantarum (strain ATCC BAA-793 / NCIMB 8826 / WCFS1) (Lactobacillus plantarum).